The primary structure comprises 123 residues: Small ribosomal subunit protein eS8 (123 aa).

Residues 1-37 (MKDQGRSTRKRTGGRLKHASNKKRHQLGREPAETTVG) form a disordered region. The segment covering 7–26 (STRKRTGGRLKHASNKKRHQ) has biased composition (basic residues).

The protein belongs to the eukaryotic ribosomal protein eS8 family. In terms of assembly, part of the 30S ribosomal subunit.

The polypeptide is Small ribosomal subunit protein eS8 (Halorubrum lacusprofundi (strain ATCC 49239 / DSM 5036 / JCM 8891 / ACAM 34)).